Consider the following 163-residue polypeptide: Putative pre-16S rRNA nuclease (163 aa).

The protein belongs to the YqgF nuclease family.

It is found in the cytoplasm. Could be a nuclease involved in processing of the 5'-end of pre-16S rRNA. This chain is Putative pre-16S rRNA nuclease, found in Roseobacter denitrificans (strain ATCC 33942 / OCh 114) (Erythrobacter sp. (strain OCh 114)).